Here is a 185-residue protein sequence, read N- to C-terminus: Ribosome-recycling factor (185 aa).

Belongs to the RRF family.

Its subcellular location is the cytoplasm. In terms of biological role, responsible for the release of ribosomes from messenger RNA at the termination of protein biosynthesis. May increase the efficiency of translation by recycling ribosomes from one round of translation to another. This Neisseria gonorrhoeae (strain ATCC 700825 / FA 1090) protein is Ribosome-recycling factor.